A 431-amino-acid polypeptide reads, in one-letter code: POU domain, class 2, transcription factor 3 (431 aa).

Disordered stretches follow at residues 1-39, 130-180, and 248-267; these read MVNL…RNGL, LLPQ…EPTD, and DAES…YPTL. The POU-specific domain occupies 176–250; the sequence is DEPTDLEELE…LLEKWLNDAE (75 aa). Positions 251 to 267 are enriched in low complexity; the sequence is SSPSDPSASTPSSYPTL. A DNA-binding region (homeobox) is located at residues 274 to 333; sequence KRKKRTSIETNIRLTLEKRFQDNPKPSSEEISMIAEQLSMEKEVVRVWFCNRRQKEKRIN. Composition is skewed to low complexity over residues 352–364, 374–390, and 398–419; these read PSGS…VPPV, SSCS…PGSG, and ASQN…NSSG. The tract at residues 352 to 419 is disordered; that stretch reads PSGSLGPLSV…SSSSSFNSSG (68 aa).

It belongs to the POU transcription factor family. Class-2 subfamily. As to quaternary structure, interacts (via the POU domain) with POU2AF1 and POU2AF2 in a DNA-dependent manner; this interaction recruits POU2AF2 to chromatin and increases POU2F3 transactivation activity. In terms of tissue distribution, skin, thymus, stomach and testis.

It is found in the nucleus. Its function is as follows. Transcription factor that binds to the octamer motif (5'-ATTTGCAT-3'). Regulates cell type-specific differentiation pathways. Involved in the regulation of keratinocytes differentiation. The POU2F3-POU2AF2/POU2AF3 complex drives the expression of tuft-cell-specific genes, a rare chemosensory cells that coordinate immune and neural functions within mucosal epithelial tissues. The chain is POU domain, class 2, transcription factor 3 (Pou2f3) from Mus musculus (Mouse).